The following is a 132-amino-acid chain: Photosystem II extrinsic protein U (132 aa).

The first 29 residues, 1 to 29 (MKRLLSWLTGALVMAGLLSSLVLPSAVYA), serve as a signal peptide directing secretion.

Belongs to the PsbU family. In terms of assembly, PSII is composed of 1 copy each of membrane proteins PsbA, PsbB, PsbC, PsbD, PsbE, PsbF, PsbH, PsbI, PsbJ, PsbK, PsbL, PsbM, PsbT, PsbX, PsbY, PsbZ, Psb30/Ycf12, peripheral proteins PsbO, CyanoQ (PsbQ), PsbU, PsbV and a large number of cofactors. It forms dimeric complexes.

It localises to the cellular thylakoid membrane. One of the extrinsic, lumenal subunits of photosystem II (PSII). PSII is a light-driven water plastoquinone oxidoreductase, using light energy to abstract electrons from H(2)O, generating a proton gradient subsequently used for ATP formation. The extrinsic proteins stabilize the structure of photosystem II oxygen-evolving complex (OEC), the ion environment of oxygen evolution and protect the OEC against heat-induced inactivation. In Synechococcus sp. (strain CC9902), this protein is Photosystem II extrinsic protein U.